The primary structure comprises 248 residues: tRNA (guanine-N(1)-)-methyltransferase (248 aa).

Residues G114 and 134–139 contribute to the S-adenosyl-L-methionine site; that span reads IGDYVL.

Belongs to the RNA methyltransferase TrmD family. In terms of assembly, homodimer.

It localises to the cytoplasm. It catalyses the reaction guanosine(37) in tRNA + S-adenosyl-L-methionine = N(1)-methylguanosine(37) in tRNA + S-adenosyl-L-homocysteine + H(+). Functionally, specifically methylates guanosine-37 in various tRNAs. In Blochmanniella floridana, this protein is tRNA (guanine-N(1)-)-methyltransferase.